The primary structure comprises 39 residues: MYRKFSDECFGPSTLINAIKVIALVVLITISAVVYLSVC.

Residues 18-38 (AIKVIALVVLITISAVVYLSV) traverse the membrane as a helical segment.

Its subcellular location is the membrane. This is an uncharacterized protein from Enterobacteriaceae (Bacteriophage Mu).